A 96-amino-acid polypeptide reads, in one-letter code: C-C motif chemokine 20 (96 aa).

A signal peptide spans 1 to 26; the sequence is MACKHLPFLALAGVLLAYLCSQSEAA. Disulfide bonds link C31/C58 and C32/C74.

The protein belongs to the intercrine beta (chemokine CC) family. Low levels in thymus and lung.

It localises to the secreted. In terms of biological role, acts as a ligand for C-C chemokine receptor CCR6. Signals through binding and activation of CCR6 and induces a strong chemotactic response and mobilization of intracellular calcium ions. The ligand-receptor pair CCL20-CCR6 is responsible for the chemotaxis of dendritic cells (DC), effector/memory T-cells and B-cells and plays an important role at skin and mucosal surfaces under homeostatic and inflammatory conditions, as well as in pathology, including cancer and autoimmune diseases. CCL20 acts as a chemotactic factor that attracts lymphocytes and, slightly, neutrophils, but not monocytes. Involved in the recruitment of both the pro-inflammatory IL17 producing helper T-cells (Th17) and the regulatory T-cells (Treg) to sites of inflammation. Required for optimal migration of thymic natural regulatory T cells (nTregs) and DN1 early thymocyte progenitor cells. Positively regulates sperm motility and chemotaxis via its binding to CCR6 which triggers Ca2+ mobilization in the sperm which is important for its motility. May be involved in formation and function of the mucosal lymphoid tissues by attracting lymphocytes and dendritic cells towards epithelial cells. The protein is C-C motif chemokine 20 (Ccl20) of Rattus norvegicus (Rat).